The primary structure comprises 464 residues: 3-isopropylmalate dehydratase large subunit (464 aa).

[4Fe-4S] cluster contacts are provided by cysteine 337, cysteine 397, and cysteine 400.

This sequence belongs to the aconitase/IPM isomerase family. LeuC type 1 subfamily. Heterodimer of LeuC and LeuD. It depends on [4Fe-4S] cluster as a cofactor.

It catalyses the reaction (2R,3S)-3-isopropylmalate = (2S)-2-isopropylmalate. It participates in amino-acid biosynthesis; L-leucine biosynthesis; L-leucine from 3-methyl-2-oxobutanoate: step 2/4. In terms of biological role, catalyzes the isomerization between 2-isopropylmalate and 3-isopropylmalate, via the formation of 2-isopropylmaleate. In Bacillus anthracis (strain A0248), this protein is 3-isopropylmalate dehydratase large subunit.